The chain runs to 313 residues: CBK1 kinase activator protein MOB2 (313 aa).

The interval 1 to 109 is disordered; that stretch reads MSFLNTIRGL…KRSSIQTTKS (109 aa). Polar residues predominate over residues 23-69; that stretch reads PSNNAIYSHSNLSGNGLRRTQSPTKFSPSKLSSKGAQGSAAYTSSPT. Phosphoserine; by CDC28 occurs at positions 44, 51, 67, and 97. The span at 76-97 shows a compositional bias: low complexity; that stretch reads QSLQHQDSQSSLQYQQQSGSVS. The segment covering 98–109 has biased composition (polar residues); that stretch reads PSKRSSIQTTKS.

It belongs to the MOB1/phocein family. In terms of assembly, interacts with protein kinase CBK1 to form the RAM CBK1-MOB2 kinase complex. In terms of processing, phosphorylated by CDC28 at Ser-44, Ser-51, Ser-67, and Ser-97. Phosphorylation occurs during bud emergence and is maintained until the G2/M transition. Dephosphorylated at the end of mitosis. Phosphorylation is required for the maintenance of polarisome components in hyphae.

The protein localises to the nucleus. It localises to the cytoplasm. Functionally, functions as an activator subunit for the CBK1 protein kinase. Part of the regulation of ACE2 activity and cellular morphogenesis (RAM) signaling network. The RAM network is critically required for hyphal growth as well as normal vegetative growth, and for polarization of lipid rafts and the actin cytoskeleton. It play an essential role in biofilm formation. The RAM network also plays a role in serum- and antifungal azoles-induced activation of ergosterol biosynthesis genes, especially those involved in the late steps of ergosterol biosynthesis. The polypeptide is CBK1 kinase activator protein MOB2 (MOB2) (Candida albicans (strain SC5314 / ATCC MYA-2876) (Yeast)).